The chain runs to 612 residues: Dihydroxy-acid dehydratase (612 aa).

Asp81 is a Mg(2+) binding site. Cys122 serves as a coordination point for [2Fe-2S] cluster. Positions 123 and 124 each coordinate Mg(2+). Lys124 carries the N6-carboxylysine modification. Cys195 is a [2Fe-2S] cluster binding site. Glu492 contacts Mg(2+). Residue Ser518 is the Proton acceptor of the active site.

The protein belongs to the IlvD/Edd family. In terms of assembly, homodimer. [2Fe-2S] cluster serves as cofactor. Mg(2+) is required as a cofactor.

The enzyme catalyses (2R)-2,3-dihydroxy-3-methylbutanoate = 3-methyl-2-oxobutanoate + H2O. It carries out the reaction (2R,3R)-2,3-dihydroxy-3-methylpentanoate = (S)-3-methyl-2-oxopentanoate + H2O. It functions in the pathway amino-acid biosynthesis; L-isoleucine biosynthesis; L-isoleucine from 2-oxobutanoate: step 3/4. Its pathway is amino-acid biosynthesis; L-valine biosynthesis; L-valine from pyruvate: step 3/4. In terms of biological role, functions in the biosynthesis of branched-chain amino acids. Catalyzes the dehydration of (2R,3R)-2,3-dihydroxy-3-methylpentanoate (2,3-dihydroxy-3-methylvalerate) into 2-oxo-3-methylpentanoate (2-oxo-3-methylvalerate) and of (2R)-2,3-dihydroxy-3-methylbutanoate (2,3-dihydroxyisovalerate) into 2-oxo-3-methylbutanoate (2-oxoisovalerate), the penultimate precursor to L-isoleucine and L-valine, respectively. The chain is Dihydroxy-acid dehydratase from Kocuria rhizophila (strain ATCC 9341 / DSM 348 / NBRC 103217 / DC2201).